A 205-amino-acid chain; its full sequence is MEGLSDVASFATKLKNTLIQYHSIEEDKWRVAKKTKDVTVWRKPSEEFNGYLYKAQGVIDDLVYSIIDHIRPGPCRLDWDSLMTSLDILENFEENCCVMRYTTAGQLWNIISPREFVDFSYTVGYKEGLLSCGISLDWDEKRPEFVRGYNHPCGWFCVPLKDNPNQSLLTGYIQTDLRGMIPQSAVDTAMASTLTNFYGDLRKAL.

The START domain maps to 1-205; sequence MEGLSDVASF…NFYGDLRKAL (205 aa).

The catalysed reaction is cholesterol(in) = cholesterol(out). Functionally, involved in the intracellular transport of cholesterol. Binds cholesterol or other sterols. The chain is StAR-related lipid transfer protein 4 (STARD4) from Homo sapiens (Human).